The primary structure comprises 258 residues: Imidazole glycerol phosphate synthase subunit HisF (258 aa).

Residues Asp-11 and Asp-130 contribute to the active site.

The protein belongs to the HisA/HisF family. Heterodimer of HisH and HisF.

The protein resides in the cytoplasm. It carries out the reaction 5-[(5-phospho-1-deoxy-D-ribulos-1-ylimino)methylamino]-1-(5-phospho-beta-D-ribosyl)imidazole-4-carboxamide + L-glutamine = D-erythro-1-(imidazol-4-yl)glycerol 3-phosphate + 5-amino-1-(5-phospho-beta-D-ribosyl)imidazole-4-carboxamide + L-glutamate + H(+). It functions in the pathway amino-acid biosynthesis; L-histidine biosynthesis; L-histidine from 5-phospho-alpha-D-ribose 1-diphosphate: step 5/9. Its function is as follows. IGPS catalyzes the conversion of PRFAR and glutamine to IGP, AICAR and glutamate. The HisF subunit catalyzes the cyclization activity that produces IGP and AICAR from PRFAR using the ammonia provided by the HisH subunit. The polypeptide is Imidazole glycerol phosphate synthase subunit HisF (Shigella boydii serotype 18 (strain CDC 3083-94 / BS512)).